Reading from the N-terminus, the 463-residue chain is Cysteine--tRNA ligase (463 aa).

C29 contacts Zn(2+). The short motif at 31-41 is the 'HIGH' region element; it reads MTIYDLCHIGH. 3 residues coordinate Zn(2+): C218, H243, and E247. Positions 275–279 match the 'KMSKS' region motif; the sequence is KMSKS. K278 serves as a coordination point for ATP.

Belongs to the class-I aminoacyl-tRNA synthetase family. Monomer. The cofactor is Zn(2+).

Its subcellular location is the cytoplasm. The enzyme catalyses tRNA(Cys) + L-cysteine + ATP = L-cysteinyl-tRNA(Cys) + AMP + diphosphate. The protein is Cysteine--tRNA ligase of Polaromonas naphthalenivorans (strain CJ2).